A 203-amino-acid chain; its full sequence is CASP-like protein 2U5 (203 aa).

At 1-31 the chain is on the cytoplasmic side; sequence MSEHRIPVAADKQISPPISAGEQKGCKGLKR. Residues 32 to 52 traverse the membrane as a helical segment; that stretch reads TDLMLRFAAFVCCAVTMVVLI. Over 53-84 the chain is Extracellular; it reads TDKQTSAIQVPGFNNLTITKTVSFDLAKAFVY. N67 is a glycosylation site (N-linked (GlcNAc...) asparagine). A helical transmembrane segment spans residues 85–105; sequence LVSAAGIGAGYTLLVLVLSII. Topologically, residues 106-111 are cytoplasmic; the sequence is SAERSK. The chain crosses the membrane as a helical span at residues 112-132; sequence AIAWFIFVFDQLITYVLLAAA. The Extracellular segment spans residues 133–164; it reads AASTEVAYMGAHAPPEASWLKVCSLFGRFCHQ. A helical transmembrane segment spans residues 165–185; sequence LGASLVTSFISTVLFAFSAAI. At 186–203 the chain is on the cytoplasmic side; that stretch reads SAYYLFSNTNVRPAYSKG.

This sequence belongs to the Casparian strip membrane proteins (CASP) family. As to quaternary structure, homodimer and heterodimers.

The protein resides in the cell membrane. The protein is CASP-like protein 2U5 of Selaginella moellendorffii (Spikemoss).